The sequence spans 197 residues: Small ribosomal subunit protein uS7 (197 aa).

It belongs to the universal ribosomal protein uS7 family.

The chain is Small ribosomal subunit protein uS7 (RPS5) from Cicer arietinum (Chickpea).